The chain runs to 360 residues: Peptide chain release factor 1 (360 aa).

N5-methylglutamine is present on glutamine 235. Basic and acidic residues predominate over residues 280 to 293; the sequence is DKQSHEQQAKEAAT. Residues 280–300 form a disordered region; that stretch reads DKQSHEQQAKEAATRKSLIGS.

This sequence belongs to the prokaryotic/mitochondrial release factor family. Post-translationally, methylated by PrmC. Methylation increases the termination efficiency of RF1.

It localises to the cytoplasm. Functionally, peptide chain release factor 1 directs the termination of translation in response to the peptide chain termination codons UAG and UAA. The polypeptide is Peptide chain release factor 1 (Paraburkholderia xenovorans (strain LB400)).